The primary structure comprises 443 residues: Glutamine synthetase (443 aa).

The 87-residue stretch at 11-97 (VQVEVPRPRF…VYGYIYKGDE (87 aa)) folds into the GS beta-grasp domain. Residues 103-443 (PRGILKRVLE…EWELERYFYV (341 aa)) enclose the GS catalytic domain. E126 and E128 together coordinate Mg(2+). An ATP-binding site is contributed by E176. 2 residues coordinate Mg(2+): E181 and E188. G233 is an L-glutamate binding site. H237 provides a ligand contact to Mg(2+). ATP-binding positions include 239–241 (HIS) and S241. Residues R287, E293, and R305 each coordinate L-glutamate. ATP contacts are provided by R305 and R310. E322 contributes to the Mg(2+) binding site. R324 lines the L-glutamate pocket.

Belongs to the glutamine synthetase family. As to quaternary structure, oligomer of 12 subunits arranged in the form of two hexagons. Mg(2+) serves as cofactor. Mn(2+) is required as a cofactor.

It localises to the cytoplasm. It carries out the reaction L-glutamate + NH4(+) + ATP = L-glutamine + ADP + phosphate + H(+). The catalysed reaction is hydroxylamine + L-glutamate + ATP = L-glutamine hydroxamate + ADP + phosphate. Its activity is regulated as follows. The activity of this enzyme is not controlled by adenylation. Functionally, carries out the ATP-dependent synthesis of glutamine from ammonium nitrogen and glutamate. Exhibits both L-gamma-glutamylhydroxamate synthetase and gamma-glutamyltransferase activities when using hydroxylamine as substrate; in fact, the enzyme possesses low biosynthetic activity, suggesting that the reaction is biased towards the degradation of glutamine under ammonia-rich conditions. Might play some role in ammonia assimilation under ammonia-starvation conditions. Can also use GTP instead of ATP in the synthetase reaction, but not CTP or UTP. This Thermococcus kodakarensis (strain ATCC BAA-918 / JCM 12380 / KOD1) (Pyrococcus kodakaraensis (strain KOD1)) protein is Glutamine synthetase.